The primary structure comprises 435 residues: Thiosulfate sulfurtransferase YnjE (435 aa).

The first 23 residues, 1–23 (MKRVSQMTALAMALGLACASSWA), serve as a signal peptide directing secretion. 3 Rhodanese domains span residues 36 to 138 (QQQN…RLQK), 164 to 270 (PAGD…PVER), and 304 to 425 (HRQD…NPVA). Residue cysteine 385 is the Cysteine persulfide intermediate of the active site. Substrate is bound at residue arginine 390.

Monomer.

Its subcellular location is the periplasm. It carries out the reaction thiosulfate + hydrogen cyanide = thiocyanate + sulfite + 2 H(+). The chain is Thiosulfate sulfurtransferase YnjE (ynjE) from Escherichia coli (strain K12).